The following is a 421-amino-acid chain: Imidazolonepropionase (421 aa).

Fe(3+) contacts are provided by His81 and His83. Residues His81 and His83 each coordinate Zn(2+). The 4-imidazolone-5-propanoate site is built by Arg90, Tyr153, and His186. Tyr153 contacts N-formimidoyl-L-glutamate. His251 contributes to the Fe(3+) binding site. Zn(2+) is bound at residue His251. Residue Glu254 participates in 4-imidazolone-5-propanoate binding. Asp326 provides a ligand contact to Fe(3+). Residue Asp326 coordinates Zn(2+). N-formimidoyl-L-glutamate is bound by residues Asn328 and Gly330. Position 331 (Ser331) interacts with 4-imidazolone-5-propanoate.

This sequence belongs to the metallo-dependent hydrolases superfamily. HutI family. The cofactor is Zn(2+). Fe(3+) is required as a cofactor.

Its subcellular location is the cytoplasm. The enzyme catalyses 4-imidazolone-5-propanoate + H2O = N-formimidoyl-L-glutamate. It participates in amino-acid degradation; L-histidine degradation into L-glutamate; N-formimidoyl-L-glutamate from L-histidine: step 3/3. Catalyzes the hydrolytic cleavage of the carbon-nitrogen bond in imidazolone-5-propanoate to yield N-formimidoyl-L-glutamate. It is the third step in the universal histidine degradation pathway. The protein is Imidazolonepropionase of Streptococcus pyogenes serotype M1.